The chain runs to 963 residues: Bifunctional glutamine synthetase adenylyltransferase/adenylyl-removing enzyme (963 aa).

Residues 1–453 are adenylyl removase; sequence MLTTLIPLSQ…IFNEIIGEEE (453 aa). The interval 461–963 is adenylyl transferase; it reads VNEKLAEWKD…VREMWQRLLA (503 aa).

This sequence belongs to the GlnE family. The cofactor is Mg(2+).

It carries out the reaction [glutamine synthetase]-O(4)-(5'-adenylyl)-L-tyrosine + phosphate = [glutamine synthetase]-L-tyrosine + ADP. It catalyses the reaction [glutamine synthetase]-L-tyrosine + ATP = [glutamine synthetase]-O(4)-(5'-adenylyl)-L-tyrosine + diphosphate. In terms of biological role, involved in the regulation of glutamine synthetase GlnA, a key enzyme in the process to assimilate ammonia. When cellular nitrogen levels are high, the C-terminal adenylyl transferase (AT) inactivates GlnA by covalent transfer of an adenylyl group from ATP to specific tyrosine residue of GlnA, thus reducing its activity. Conversely, when nitrogen levels are low, the N-terminal adenylyl removase (AR) activates GlnA by removing the adenylyl group by phosphorolysis, increasing its activity. The regulatory region of GlnE binds the signal transduction protein PII (GlnB) which indicates the nitrogen status of the cell. The polypeptide is Bifunctional glutamine synthetase adenylyltransferase/adenylyl-removing enzyme (Mannheimia haemolytica (Pasteurella haemolytica)).